Reading from the N-terminus, the 339-residue chain is DNA-directed RNA polymerase subunit alpha (339 aa).

Residues 1 to 235 are alpha N-terminal domain (alpha-NTD); sequence MVIQKNWQEL…DQLQVFVNFE (235 aa). The tract at residues 251–339 is alpha C-terminal domain (alpha-CTD); that stretch reads FNPALLKKVD…DLAKRFEEHY (89 aa).

It belongs to the RNA polymerase alpha chain family. Homodimer. The RNAP catalytic core consists of 2 alpha, 1 beta, 1 beta' and 1 omega subunit. When a sigma factor is associated with the core the holoenzyme is formed, which can initiate transcription.

The enzyme catalyses RNA(n) + a ribonucleoside 5'-triphosphate = RNA(n+1) + diphosphate. Its function is as follows. DNA-dependent RNA polymerase catalyzes the transcription of DNA into RNA using the four ribonucleoside triphosphates as substrates. The sequence is that of DNA-directed RNA polymerase subunit alpha from Methylobacterium radiotolerans (strain ATCC 27329 / DSM 1819 / JCM 2831 / NBRC 15690 / NCIMB 10815 / 0-1).